The sequence spans 425 residues: ATP-dependent RNA helicase eIF4A (425 aa).

A Q motif motif is present at residues 38–66 (DTWEDYGLKEDLLKGIYSIGFETPSFIQK). In terms of domain architecture, Helicase ATP-binding spans 69-241 (IQPIIDGRDI…EEILINPVII (173 aa)). 82–89 (AQSGTGKT) lines the ATP pocket. Positions 187-190 (DEAD) match the DEAD box motif. Residues 252–425 (GIRQYFIDLR…KELPADFSFQ (174 aa)) enclose the Helicase C-terminal domain.

This sequence belongs to the DEAD box helicase family. eIF4A subfamily. As to quaternary structure, component of the eIF4F complex, which composition varies with external and internal environmental conditions. It is composed of at least eIF4A, eIF4E and eIF4G.

The protein resides in the cytoplasm. The catalysed reaction is ATP + H2O = ADP + phosphate + H(+). ATP-dependent RNA helicase which is a subunit of the eIF4F complex involved in cap recognition and is required for mRNA binding to ribosome. In the current model of translation initiation, eIF4A unwinds RNA secondary structures in the 5'-UTR of mRNAs which is necessary to allow efficient binding of the small ribosomal subunit, and subsequent scanning for the initiator codon. The polypeptide is ATP-dependent RNA helicase eIF4A (TIF1) (Encephalitozoon cuniculi (strain GB-M1) (Microsporidian parasite)).